A 730-amino-acid chain; its full sequence is Ribosomal RNA large subunit methyltransferase K/L (730 aa).

One can recognise a THUMP domain in the interval 46-157 (TAYRLCLWSR…RGEAILSLDL (112 aa)).

It belongs to the methyltransferase superfamily. RlmKL family.

Its subcellular location is the cytoplasm. The catalysed reaction is guanosine(2445) in 23S rRNA + S-adenosyl-L-methionine = N(2)-methylguanosine(2445) in 23S rRNA + S-adenosyl-L-homocysteine + H(+). It catalyses the reaction guanosine(2069) in 23S rRNA + S-adenosyl-L-methionine = N(2)-methylguanosine(2069) in 23S rRNA + S-adenosyl-L-homocysteine + H(+). In terms of biological role, specifically methylates the guanine in position 2445 (m2G2445) and the guanine in position 2069 (m7G2069) of 23S rRNA. The polypeptide is Ribosomal RNA large subunit methyltransferase K/L (Pseudomonas putida (strain W619)).